A 177-amino-acid chain; its full sequence is B-phycoerythrin beta chain (177 aa).

Phycourobilin-binding residues include Cys50 and Cys61. Position 72 is an N4-methylasparagine (Asn72). (2R,3E)-phycoerythrobilin-binding residues include Cys82 and Cys158.

This sequence belongs to the phycobiliprotein family. In terms of assembly, heteromer of 6 alpha, 6 beta and one gamma chain. In terms of processing, contains two covalently linked phycoerythrobilin chromophores and one covalently linked phycourobilin chromophore.

The protein resides in the plastid. Its subcellular location is the chloroplast thylakoid membrane. Functionally, light-harvesting photosynthetic bile pigment-protein from the phycobiliprotein complex. The polypeptide is B-phycoerythrin beta chain (cpeB) (Rhodella violacea (Red alga)).